Here is a 349-residue protein sequence, read N- to C-terminus: 5-deoxyribose 1-phosphate isomerase (349 aa).

Substrate contacts are provided by residues 49–51, R92, and Q199; that span reads RGA. D240 acts as the Proton donor in catalysis. Residue 250-251 participates in substrate binding; the sequence is NK.

It belongs to the EIF-2B alpha/beta/delta subunits family. DrdI subfamily.

The catalysed reaction is 5-deoxy-alpha-D-ribose 1-phosphate = 5-deoxy-D-ribulose 1-phosphate. It participates in carbohydrate degradation. Its function is as follows. Catalyzes the isomerization of 5-deoxy-alpha-D-ribose 1-phosphate to 5-deoxy-D-ribulose 1-phosphate, as part of a 5-deoxyribose salvage pathway that recycles this toxic radical SAM enzyme by-product to mainstream metabolites. This is 5-deoxyribose 1-phosphate isomerase from Clostridium botulinum (strain ATCC 19397 / Type A).